We begin with the raw amino-acid sequence, 173 residues long: Translation initiation factor IF-3 (173 aa).

It belongs to the IF-3 family. As to quaternary structure, monomer.

The protein localises to the cytoplasm. Its function is as follows. IF-3 binds to the 30S ribosomal subunit and shifts the equilibrium between 70S ribosomes and their 50S and 30S subunits in favor of the free subunits, thus enhancing the availability of 30S subunits on which protein synthesis initiation begins. In Ehrlichia ruminantium (strain Gardel), this protein is Translation initiation factor IF-3.